An 82-amino-acid chain; its full sequence is Large ribosomal subunit protein uL23 (82 aa).

Belongs to the universal ribosomal protein uL23 family. Part of the 50S ribosomal subunit. Contacts protein L29.

In terms of biological role, binds to 23S rRNA. One of the proteins that surrounds the polypeptide exit tunnel on the outside of the ribosome. This Natronomonas pharaonis (strain ATCC 35678 / DSM 2160 / CIP 103997 / JCM 8858 / NBRC 14720 / NCIMB 2260 / Gabara) (Halobacterium pharaonis) protein is Large ribosomal subunit protein uL23.